The primary structure comprises 337 residues: tRNA N6-adenosine threonylcarbamoyltransferase (337 aa).

Positions 111 and 115 each coordinate Fe cation. Substrate contacts are provided by residues 134 to 138, Asp167, Gly180, and Asn272; that span reads LVSGG. Asp300 serves as a coordination point for Fe cation.

The protein belongs to the KAE1 / TsaD family. It depends on Fe(2+) as a cofactor.

Its subcellular location is the cytoplasm. The catalysed reaction is L-threonylcarbamoyladenylate + adenosine(37) in tRNA = N(6)-L-threonylcarbamoyladenosine(37) in tRNA + AMP + H(+). Its function is as follows. Required for the formation of a threonylcarbamoyl group on adenosine at position 37 (t(6)A37) in tRNAs that read codons beginning with adenine. Is involved in the transfer of the threonylcarbamoyl moiety of threonylcarbamoyl-AMP (TC-AMP) to the N6 group of A37, together with TsaE and TsaB. TsaD likely plays a direct catalytic role in this reaction. This is tRNA N6-adenosine threonylcarbamoyltransferase from Shewanella sediminis (strain HAW-EB3).